Consider the following 132-residue polypeptide: Large ribosomal subunit protein bL17 (132 aa).

This sequence belongs to the bacterial ribosomal protein bL17 family. As to quaternary structure, part of the 50S ribosomal subunit. Contacts protein L32.

The sequence is that of Large ribosomal subunit protein bL17 from Ehrlichia canis (strain Jake).